Here is a 307-residue protein sequence, read N- to C-terminus: Aspartate carbamoyltransferase catalytic subunit (307 aa).

Residues R51 and T52 each contribute to the carbamoyl phosphate site. K80 provides a ligand contact to L-aspartate. 3 residues coordinate carbamoyl phosphate: R101, H129, and Q132. R162 and R225 together coordinate L-aspartate. 2 residues coordinate carbamoyl phosphate: L264 and P265.

This sequence belongs to the aspartate/ornithine carbamoyltransferase superfamily. ATCase family. In terms of assembly, heterododecamer (2C3:3R2) of six catalytic PyrB chains organized as two trimers (C3), and six regulatory PyrI chains organized as three dimers (R2).

It catalyses the reaction carbamoyl phosphate + L-aspartate = N-carbamoyl-L-aspartate + phosphate + H(+). The protein operates within pyrimidine metabolism; UMP biosynthesis via de novo pathway; (S)-dihydroorotate from bicarbonate: step 2/3. Its function is as follows. Catalyzes the condensation of carbamoyl phosphate and aspartate to form carbamoyl aspartate and inorganic phosphate, the committed step in the de novo pyrimidine nucleotide biosynthesis pathway. This is Aspartate carbamoyltransferase catalytic subunit from Lachnoclostridium phytofermentans (strain ATCC 700394 / DSM 18823 / ISDg) (Clostridium phytofermentans).